Reading from the N-terminus, the 294-residue chain is Foldase protein PrsA 1 (294 aa).

The first 21 residues, 1 to 21 (MTKLKKVMISVIAATLLLLAG), serve as a signal peptide directing secretion. Residue Cys-22 is the site of N-palmitoyl cysteine attachment. Residue Cys-22 is the site of S-diacylglycerol cysteine attachment. Residues 135 to 226 (EPDITVRHIL…YGYHLIQLVK (92 aa)) enclose the PpiC domain.

It belongs to the PrsA family.

It is found in the cell membrane. It catalyses the reaction [protein]-peptidylproline (omega=180) = [protein]-peptidylproline (omega=0). Plays a major role in protein secretion by helping the post-translocational extracellular folding of several secreted proteins. The protein is Foldase protein PrsA 1 of Listeria monocytogenes serotype 4b (strain F2365).